Here is a 169-residue protein sequence, read N- to C-terminus: Ribosome maturation factor RimM (169 aa).

Residues 95–169 (EDGYYWTDLI…QITVDWELGY (75 aa)) enclose the PRC barrel domain.

This sequence belongs to the RimM family. Binds ribosomal protein uS19.

It localises to the cytoplasm. An accessory protein needed during the final step in the assembly of 30S ribosomal subunit, possibly for assembly of the head region. Essential for efficient processing of 16S rRNA. May be needed both before and after RbfA during the maturation of 16S rRNA. It has affinity for free ribosomal 30S subunits but not for 70S ribosomes. The protein is Ribosome maturation factor RimM of Nitrosomonas europaea (strain ATCC 19718 / CIP 103999 / KCTC 2705 / NBRC 14298).